Reading from the N-terminus, the 616-residue chain is DNA mismatch repair protein MutL (616 aa).

This sequence belongs to the DNA mismatch repair MutL/HexB family.

Its function is as follows. This protein is involved in the repair of mismatches in DNA. It is required for dam-dependent methyl-directed DNA mismatch repair. May act as a 'molecular matchmaker', a protein that promotes the formation of a stable complex between two or more DNA-binding proteins in an ATP-dependent manner without itself being part of a final effector complex. The polypeptide is DNA mismatch repair protein MutL (Syntrophus aciditrophicus (strain SB)).